The following is a 158-amino-acid chain: 14-3-3 protein gamma (158 aa).

Positions 1 to 158 (AAAMKNVTEL…TSDQQDDDGG (158 aa)) are interaction with SPATA18/MIEAP. Ser48 carries the post-translational modification Phosphoserine. Tyr60 bears the Phosphotyrosine mark. Position 72 is a phosphothreonine (Thr72). Position 130 is a phosphoserine (Ser130). The residue at position 149 (Thr149) is a Phosphothreonine. Ser150 is modified (phosphoserine).

The protein belongs to the 14-3-3 family. Homodimer. Part of a complex that contains DSG3, PKP1, YAP1 and YWHAG; the complex is required for localization of DSG3 and YAP1 to the cell membrane in keratinocytes. Interacts with SAMSN1. Interacts with RAF1, SSH1 and CRTC2/TORC2. Interacts with ABL1 (phosphorylated form); the interaction retains it in the cytoplasm. Interacts with GAB2. Interacts with MDM4 (phosphorylated); negatively regulates MDM4 activity toward TP53. Interacts with PKA-phosphorylated AANAT and SIRT2. Interacts with the 'Thr-369' phosphorylated form of DAPK2. Interacts with PI4KB, TBC1D22A and TBC1D22B. Interacts with SLITRK1. Interacts with LRRK2; this interaction is dependent on LRRK2 phosphorylation. Interacts with MARK2 and MARK3. Interacts with MEFV. Interacts with ENDOG, TSC2 and PIK3C3; interaction with ENDOG weakens its interaction with TSC2 and PIK3C3. Interacts with (phosphorylated) WDR24. Interacts with BEST1; this interaction promotes L-glutamate channel activity leading to the positive regulation of NMDA glutamate receptor activity through the L-glutamate secretion. Interacts with PKP1 (when phosphorylated); the interaction results in translocation of PKP1 to the cytoplasm and loss of intercellular adhesion in keratinocytes. Interacts with SPATA18/MIEAP; a protein that also plays a role in MALM. In terms of processing, phosphorylated by various PKC isozymes.

Its subcellular location is the cytoplasm. The protein localises to the cytosol. It is found in the mitochondrion matrix. In terms of biological role, adapter protein implicated in the regulation of a large spectrum of both general and specialized signaling pathways. Binds to a large number of partners, usually by recognition of a phosphoserine or phosphothreonine motif. Binding generally results in the modulation of the activity of the binding partner. Promotes inactivation of WDR24 component of the GATOR2 complex by binding to phosphorylated WDR24. Participates in the positive regulation of NMDA glutamate receptor activity by promoting the L-glutamate secretion through interaction with BEST1. Reduces keratinocyte intercellular adhesion, via interacting with PKP1 and sequestering it in the cytoplasm, thereby reducing its incorporation into desmosomes. Plays a role in mitochondrial protein catabolic process (also named MALM) that promotes the degradation of damaged proteins inside mitochondria. This is 14-3-3 protein gamma from Ovis aries (Sheep).